The primary structure comprises 124 residues: MaFF-interacting protein (124 aa).

The stretch at 54 to 96 (LVSEVEELYKSITALREKLLQAEQSLRNLKDIHMSLEKDVTAM) forms a coiled coil.

This sequence belongs to the tektin family. In terms of assembly, interacts with MIS18A. Interacts (via its coiled-coil region) with MAFF. As to expression, strongly expressed in brain, kidney and ovary. Moderately expressed in liver, spleen, thymus, prostate, testis, small intestine and colon. Weakly expressed in heart, placenta, lung and leukocytes.

The protein resides in the cytoplasm. Its subcellular location is the nucleus. The protein localises to the nucleolus. Its function is as follows. Acts as a coactivator of MAFF transcriptional activity. Inhibits cell growth and colony-forming efficiency. This is MaFF-interacting protein (MAFIP) from Homo sapiens (Human).